Here is a 498-residue protein sequence, read N- to C-terminus: Signal recognition particle receptor FtsY (498 aa).

2 disordered regions span residues 1–130 (MGLF…PNQS) and 147–200 (KVES…YNRS). A compositionally biased stretch (low complexity) spans 36–46 (ALLAETAETAE). Over residues 103–120 (SENSVAAVQNNTETMPSQ) the composition is skewed to polar residues. GTP contacts are provided by residues 301–308 (GVNGVGKT), 383–387 (DTAGR), and 447–450 (TKID).

The protein belongs to the GTP-binding SRP family. FtsY subfamily. Part of the signal recognition particle protein translocation system, which is composed of SRP and FtsY.

It localises to the cell membrane. It is found in the cytoplasm. The catalysed reaction is GTP + H2O = GDP + phosphate + H(+). In terms of biological role, involved in targeting and insertion of nascent membrane proteins into the cytoplasmic membrane. Acts as a receptor for the complex formed by the signal recognition particle (SRP) and the ribosome-nascent chain (RNC). This is Signal recognition particle receptor FtsY from Streptococcus mutans serotype c (strain ATCC 700610 / UA159).